The following is a 559-amino-acid chain: T-complex protein 1 subunit gamma (559 aa).

Cys368 and Cys374 are joined by a disulfide. Residues 531-559 (KDKRGGAGQRGGDRGQGDQEETFGDQRDG) are disordered.

Belongs to the TCP-1 chaperonin family. In terms of assembly, heterooligomeric complex of about 850 to 900 kDa that forms two stacked rings, 12 to 16 nm in diameter.

It localises to the cytoplasm. Molecular chaperone; assists the folding of proteins upon ATP hydrolysis. Known to play a role, in vitro, in the folding of actin and tubulin. The sequence is that of T-complex protein 1 subunit gamma from Oxytricha granulifera (Ciliate).